We begin with the raw amino-acid sequence, 493 residues long: UDP-N-acetylmuramoyl-L-alanyl-D-glutamate--2,6-diaminopimelate ligase (493 aa).

Thr-32 serves as a coordination point for UDP-N-acetyl-alpha-D-muramoyl-L-alanyl-D-glutamate. 110 to 116 (GTNGKTT) serves as a coordination point for ATP. UDP-N-acetyl-alpha-D-muramoyl-L-alanyl-D-glutamate-binding positions include Asn-151, 152–153 (TT), Ser-179, and Arg-187. At Lys-219 the chain carries N6-carboxylysine. Residues Arg-386, 410-413 (DNPR), Gly-460, and Glu-464 each bind meso-2,6-diaminopimelate. The short motif at 410–413 (DNPR) is the Meso-diaminopimelate recognition motif element.

It belongs to the MurCDEF family. MurE subfamily. The cofactor is Mg(2+). Carboxylation is probably crucial for Mg(2+) binding and, consequently, for the gamma-phosphate positioning of ATP.

The protein resides in the cytoplasm. The enzyme catalyses UDP-N-acetyl-alpha-D-muramoyl-L-alanyl-D-glutamate + meso-2,6-diaminopimelate + ATP = UDP-N-acetyl-alpha-D-muramoyl-L-alanyl-gamma-D-glutamyl-meso-2,6-diaminopimelate + ADP + phosphate + H(+). It participates in cell wall biogenesis; peptidoglycan biosynthesis. Catalyzes the addition of meso-diaminopimelic acid to the nucleotide precursor UDP-N-acetylmuramoyl-L-alanyl-D-glutamate (UMAG) in the biosynthesis of bacterial cell-wall peptidoglycan. The sequence is that of UDP-N-acetylmuramoyl-L-alanyl-D-glutamate--2,6-diaminopimelate ligase from Lactiplantibacillus plantarum (strain ATCC BAA-793 / NCIMB 8826 / WCFS1) (Lactobacillus plantarum).